A 760-amino-acid polypeptide reads, in one-letter code: MIRGMLPRGLRALRPSVSPTVVSSSLHRNFHSSIRRFDEKIPETYEEEKVIIDEINQSLTEKDLASSSRLRNIGVSAHIDSGKTTFTERVLYYTGRIKAIHEVRGRDAVGAKMDHMELEREKGITIQSAATYCSWDKDDKNYHFNLIDTPGHIDFTIEVERALRVLDGAVLVVCAVSGVQSQTVTVDRQMRRYNVPRVTFINKMDRMGADPFRAIEQINLKLKTPAAAIQVPIGAESELKGVVNIIDRVALYNEGAQGEEIRAAEVPAELADLVEEKRALLIETLADVDEEIADLYLEGQEPTVPQIKAAIRRATIGRKFTPVLMGSALANKGVQPVLDAVVDYLPQPNEILNTGLDISTGVEKRTNLIPSSTAPFVGLAFKLEEGKYGQLTYIRVYQGKLKKGSYMNHIKSGKKVKVSRLVRMHSNDMEDVDEVGAGEICATFGIDCASGDTFIGHNSEQQIAMSSMFVPEAVISLSISPKSKDNGQFSKAMNRFQKEDPTFRVKYDPESKETIISGMGELHLEIYVERMKREYGVECITGKPQVSYREAITAPTTFDYTHKKQSGGSGQYGRVMGEMTPLEGENKFSQHIVGGKIPEKFLFACSKGFEDSLEKGPLIGHRVLGVHMHINDGQTHVVDSSELSFRTATHGAFRQAFLNAKPVILEPIMSVEVSAPNEFQGSVVGLINKLGGMILETVNGQDEFTVTAECSLNTMFGFSTSLRACTQGKGEFSLEFCKYSQCAPQLQRELIAEHEKKQKK.

The transit peptide at 1 to 37 (MIRGMLPRGLRALRPSVSPTVVSSSLHRNFHSSIRRF) directs the protein to the mitochondrion. The region spanning 68 to 349 (SRLRNIGVSA…AVVDYLPQPN (282 aa)) is the tr-type G domain. GTP contacts are provided by residues 77–84 (AHIDSGKT), 148–152 (DTPGH), and 202–205 (NKMD).

It belongs to the TRAFAC class translation factor GTPase superfamily. Classic translation factor GTPase family. EF-G/EF-2 subfamily.

It localises to the mitochondrion. It functions in the pathway protein biosynthesis; polypeptide chain elongation. Functionally, mitochondrial GTPase that catalyzes the GTP-dependent ribosomal translocation step during translation elongation. During this step, the ribosome changes from the pre-translocational (PRE) to the post-translocational (POST) state as the newly formed A-site-bound peptidyl-tRNA and P-site-bound deacylated tRNA move to the P and E sites, respectively. Catalyzes the coordinated movement of the two tRNA molecules, the mRNA and conformational changes in the ribosome. This Meyerozyma guilliermondii (strain ATCC 6260 / CBS 566 / DSM 6381 / JCM 1539 / NBRC 10279 / NRRL Y-324) (Yeast) protein is Elongation factor G, mitochondrial.